We begin with the raw amino-acid sequence, 368 residues long: UDP-N-acetylglucosamine--N-acetylmuramyl-(pentapeptide) pyrophosphoryl-undecaprenol N-acetylglucosamine transferase (368 aa).

Residues 14-16 (TGG), asparagine 125, arginine 168, serine 196, and glutamine 297 contribute to the UDP-N-acetyl-alpha-D-glucosamine site.

It belongs to the glycosyltransferase 28 family. MurG subfamily.

Its subcellular location is the cell inner membrane. It catalyses the reaction di-trans,octa-cis-undecaprenyl diphospho-N-acetyl-alpha-D-muramoyl-L-alanyl-D-glutamyl-meso-2,6-diaminopimeloyl-D-alanyl-D-alanine + UDP-N-acetyl-alpha-D-glucosamine = di-trans,octa-cis-undecaprenyl diphospho-[N-acetyl-alpha-D-glucosaminyl-(1-&gt;4)]-N-acetyl-alpha-D-muramoyl-L-alanyl-D-glutamyl-meso-2,6-diaminopimeloyl-D-alanyl-D-alanine + UDP + H(+). It functions in the pathway cell wall biogenesis; peptidoglycan biosynthesis. Cell wall formation. Catalyzes the transfer of a GlcNAc subunit on undecaprenyl-pyrophosphoryl-MurNAc-pentapeptide (lipid intermediate I) to form undecaprenyl-pyrophosphoryl-MurNAc-(pentapeptide)GlcNAc (lipid intermediate II). This is UDP-N-acetylglucosamine--N-acetylmuramyl-(pentapeptide) pyrophosphoryl-undecaprenol N-acetylglucosamine transferase from Nitrobacter winogradskyi (strain ATCC 25391 / DSM 10237 / CIP 104748 / NCIMB 11846 / Nb-255).